The chain runs to 147 residues: Small ribosomal subunit protein uS12 (147 aa).

It belongs to the universal ribosomal protein uS12 family. Part of the 30S ribosomal subunit.

With S4 and S5 plays an important role in translational accuracy. Located at the interface of the 30S and 50S subunits. The chain is Small ribosomal subunit protein uS12 from Thermofilum pendens (strain DSM 2475 / Hrk 5).